A 235-amino-acid polypeptide reads, in one-letter code: uncharacterized protein (235 aa).

The next 7 helical transmembrane spans lie at 2–22 (VIGP…GALL), 34–54 (MTSI…VKCA), 56–76 (LPAM…CLLE), 102–122 (FIQN…GIFG), 147–167 (MIFA…LLII), 178–198 (ILPL…GLLL), and 210–230 (MFPV…SAAW).

The protein localises to the cell membrane. This is an uncharacterized protein from Escherichia coli (strain K12).